The sequence spans 567 residues: Formate--tetrahydrofolate ligase (567 aa).

Position 76 to 83 (76 to 83 (TPAGEGKT)) interacts with ATP.

This sequence belongs to the formate--tetrahydrofolate ligase family.

The enzyme catalyses (6S)-5,6,7,8-tetrahydrofolate + formate + ATP = (6R)-10-formyltetrahydrofolate + ADP + phosphate. The protein operates within one-carbon metabolism; tetrahydrofolate interconversion. The protein is Formate--tetrahydrofolate ligase of Sinorhizobium medicae (strain WSM419) (Ensifer medicae).